A 250-amino-acid polypeptide reads, in one-letter code: Geranylgeranylglyceryl phosphate synthase (250 aa).

Positions 23 and 52 each coordinate Mg(2+). Residues 170–176, 202–203, and 224–225 contribute to the sn-glycerol 1-phosphate site; these read YIEAGSG, GG, and GT.

It belongs to the GGGP/HepGP synthase family. Group II subfamily. It depends on Mg(2+) as a cofactor.

The protein localises to the cytoplasm. The catalysed reaction is sn-glycerol 1-phosphate + (2E,6E,10E)-geranylgeranyl diphosphate = sn-3-O-(geranylgeranyl)glycerol 1-phosphate + diphosphate. It functions in the pathway membrane lipid metabolism; glycerophospholipid metabolism. In terms of biological role, prenyltransferase that catalyzes the transfer of the geranylgeranyl moiety of geranylgeranyl diphosphate (GGPP) to the C3 hydroxyl of sn-glycerol-1-phosphate (G1P). This reaction is the first ether-bond-formation step in the biosynthesis of archaeal membrane lipids. This chain is Geranylgeranylglyceryl phosphate synthase, found in Methanobrevibacter smithii (strain ATCC 35061 / DSM 861 / OCM 144 / PS).